A 188-amino-acid chain; its full sequence is NADH-quinone oxidoreductase subunit I 2 (188 aa).

4Fe-4S ferredoxin-type domains are found at residues 56-88 and 98-127; these read HFLK…VVPY and AKFE…LGQQ. [4Fe-4S] cluster contacts are provided by C68, C71, C74, C78, C107, C110, C113, and C117.

This sequence belongs to the complex I 23 kDa subunit family. In terms of assembly, NDH-1 is composed of 14 different subunits. Subunits NuoA, H, J, K, L, M, N constitute the membrane sector of the complex. It depends on [4Fe-4S] cluster as a cofactor.

Its subcellular location is the cell inner membrane. The catalysed reaction is a quinone + NADH + 5 H(+)(in) = a quinol + NAD(+) + 4 H(+)(out). In terms of biological role, NDH-1 shuttles electrons from NADH, via FMN and iron-sulfur (Fe-S) centers, to quinones in the respiratory chain. The immediate electron acceptor for the enzyme in this species is believed to be ubiquinone. Couples the redox reaction to proton translocation (for every two electrons transferred, four hydrogen ions are translocated across the cytoplasmic membrane), and thus conserves the redox energy in a proton gradient. The chain is NADH-quinone oxidoreductase subunit I 2 from Rhizobium meliloti (strain 1021) (Ensifer meliloti).